Here is a 1966-residue protein sequence, read N- to C-terminus: Dedicator of cytokinesis protein 4 (1966 aa).

One can recognise an SH3 domain in the interval 6–67 (EHEKYGVVIA…PSSYVHLKNA (62 aa)). Tyr167 bears the Phosphotyrosine mark. Thr193 bears the Phosphothreonine mark. Residues 401 to 574 (RNDLYITIER…ESFCITSFLC (174 aa)) form the C2 DOCK-type domain. Residues 1190-1596 (KTELNKEEMY…LGIQEFSACM (407 aa)) form the DOCKER domain. 6 positions are modified to phosphoserine: Ser1599, Ser1607, Ser1614, Ser1618, Ser1620, and Ser1631. Disordered regions lie at residues 1648-1729 (SQAS…IYPT) and 1742-1966 (IGDG…VSQL). Residues 1672–1703 (PSPSTSSLSSTHSASPNVTSSAPSSARASPLL) are compositionally biased toward low complexity. At Ser1769 the chain carries Phosphoserine. The short motif at 1788–1794 (PPVPPRP) is the SH3-binding element. Positions 1795 to 1809 (TQTASPARHTTSVSP) are enriched in polar residues. Residues 1838 to 1863 (SNSPVLSGSYSSGISSLSRCSTSETS) are compositionally biased toward low complexity. Polar residues predominate over residues 1864-1873 (GFENQVNEQS). Positions 1941–1954 (SHLENGARRTDPGP) are enriched in basic and acidic residues.

Belongs to the DOCK family. In terms of assembly, interacts with nucleotide-free Rap1; functions as a guanine nucleotide exchange factor (GEF) for Rap1. Interacts (via DOCKER domain) with RAC1; functions as a guanine nucleotide exchange factor (GEF) for RAC1. Interacts with the SH3 domain of CRK. Interacts with FASLG. Interacts with ELMO2 and EPHA2; mediates activation of RAC1 by EPHA2. Interacts with USH1C (via PDZ 1 domain). Widely expressed at low level. Highly expressed in skeletal muscle, prostate and ovary. In terms of tissue distribution, may be specifically expressed in the brain and eye.

It localises to the cell membrane. Its subcellular location is the cell projection. The protein localises to the cytoplasm. The protein resides in the cytosol. Functionally, functions as a guanine nucleotide exchange factor (GEF) that promotes the exchange of GDP to GTP, converting inactive GDP-bound small GTPases into their active GTP-bound form. Involved in regulation of adherens junction between cells. Plays a role in cell migration. Has a higher guanine nucleotide exchange factor activity compared to other isoforms. This chain is Dedicator of cytokinesis protein 4 (DOCK4), found in Homo sapiens (Human).